We begin with the raw amino-acid sequence, 88 residues long: Large ribosomal subunit protein bL27 (88 aa).

A disordered region spans residues 1-24 (MAHKKAGGSSRNGRDSAGQRRGVK).

The protein belongs to the bacterial ribosomal protein bL27 family.

In Syntrophobacter fumaroxidans (strain DSM 10017 / MPOB), this protein is Large ribosomal subunit protein bL27.